Consider the following 179-residue polypeptide: Endoribonuclease YbeY (179 aa).

Residues histidine 141, histidine 145, and histidine 151 each coordinate Zn(2+).

The protein belongs to the endoribonuclease YbeY family. Zn(2+) is required as a cofactor.

It is found in the cytoplasm. Its function is as follows. Single strand-specific metallo-endoribonuclease involved in late-stage 70S ribosome quality control and in maturation of the 3' terminus of the 16S rRNA. The polypeptide is Endoribonuclease YbeY (Synechocystis sp. (strain ATCC 27184 / PCC 6803 / Kazusa)).